The primary structure comprises 720 residues: Engulfment and cell motility protein 3 (720 aa).

Positions 307-479 constitute an ELMO domain; the sequence is EQRDQLQALR…VVREQLARTL (173 aa). The PH domain occupies 542-664; it reads RLCEGMLFRK…TDGLSALLGS (123 aa). Positions 696–706 match the SH3-binding motif; sequence PEQPPPVPPPP.

In terms of assembly, probably interacts directly with the SH3-domain of DOCK1 via its SH3-binding site. Part of a complex with DOCK1 and RAC1. Interacts with ADGRB3.

It localises to the cytoplasm. Functionally, involved in cytoskeletal rearrangements required for phagocytosis of apoptotic cells and cell motility. Acts in association with DOCK1 and CRK. Was initially proposed to be required in complex with DOCK1 to activate Rac Rho small GTPases. May enhance the guanine nucleotide exchange factor (GEF) activity of DOCK1. The chain is Engulfment and cell motility protein 3 (Elmo3) from Mus musculus (Mouse).